The chain runs to 212 residues: Thiamine-phosphate synthase (212 aa).

4-amino-2-methyl-5-(diphosphooxymethyl)pyrimidine contacts are provided by residues 39-41 (QLR) and N71. Residues D72 and D91 each coordinate Mg(2+). A 4-amino-2-methyl-5-(diphosphooxymethyl)pyrimidine-binding site is contributed by S110. 136–138 (TGT) provides a ligand contact to 2-[(2R,5Z)-2-carboxy-4-methylthiazol-5(2H)-ylidene]ethyl phosphate. K139 contributes to the 4-amino-2-methyl-5-(diphosphooxymethyl)pyrimidine binding site. Residues G167 and 187-188 (VS) each bind 2-[(2R,5Z)-2-carboxy-4-methylthiazol-5(2H)-ylidene]ethyl phosphate.

The protein belongs to the thiamine-phosphate synthase family. Mg(2+) serves as cofactor.

It catalyses the reaction 2-[(2R,5Z)-2-carboxy-4-methylthiazol-5(2H)-ylidene]ethyl phosphate + 4-amino-2-methyl-5-(diphosphooxymethyl)pyrimidine + 2 H(+) = thiamine phosphate + CO2 + diphosphate. It carries out the reaction 2-(2-carboxy-4-methylthiazol-5-yl)ethyl phosphate + 4-amino-2-methyl-5-(diphosphooxymethyl)pyrimidine + 2 H(+) = thiamine phosphate + CO2 + diphosphate. The enzyme catalyses 4-methyl-5-(2-phosphooxyethyl)-thiazole + 4-amino-2-methyl-5-(diphosphooxymethyl)pyrimidine + H(+) = thiamine phosphate + diphosphate. It participates in cofactor biosynthesis; thiamine diphosphate biosynthesis; thiamine phosphate from 4-amino-2-methyl-5-diphosphomethylpyrimidine and 4-methyl-5-(2-phosphoethyl)-thiazole: step 1/1. Its function is as follows. Condenses 4-methyl-5-(beta-hydroxyethyl)thiazole monophosphate (THZ-P) and 2-methyl-4-amino-5-hydroxymethyl pyrimidine pyrophosphate (HMP-PP) to form thiamine monophosphate (TMP). The chain is Thiamine-phosphate synthase from Azorhizobium caulinodans (strain ATCC 43989 / DSM 5975 / JCM 20966 / LMG 6465 / NBRC 14845 / NCIMB 13405 / ORS 571).